The primary structure comprises 309 residues: tRNA dimethylallyltransferase (309 aa).

Residue 13–20 participates in ATP binding; sequence GPTGAGKT. Residue 15 to 20 participates in substrate binding; sequence TGAGKT. 2 interaction with substrate tRNA regions span residues 38 to 41 and 162 to 166; these read DSRQ and QRVTR.

The protein belongs to the IPP transferase family. In terms of assembly, monomer. The cofactor is Mg(2+).

It catalyses the reaction adenosine(37) in tRNA + dimethylallyl diphosphate = N(6)-dimethylallyladenosine(37) in tRNA + diphosphate. Functionally, catalyzes the transfer of a dimethylallyl group onto the adenine at position 37 in tRNAs that read codons beginning with uridine, leading to the formation of N6-(dimethylallyl)adenosine (i(6)A). This chain is tRNA dimethylallyltransferase, found in Nitratidesulfovibrio vulgaris (strain ATCC 29579 / DSM 644 / CCUG 34227 / NCIMB 8303 / VKM B-1760 / Hildenborough) (Desulfovibrio vulgaris).